Here is a 377-residue protein sequence, read N- to C-terminus: MSLPELKNFRRIVVKVGSSLLIDSAAGEVRATWLAALAADIAALHRDGRDVMVVSSGSIALGRSRLKLPRGPLKLEESQAAAAVGQIALARIWSEVLGAHGIGAGQILVTFQDTEERRRYLNARSTIAKLLEWRAVPVINENDTVATAEIRYGDNDRLAARVATMASADLLILLSDIDGLYTAPPVANPDAELIPVVESVSAEIEAMAGGAESELSRGGMYTKIEAAKIATTAGTHMLIANGKIEHPLQAIADGGRCTWFLTPANPVTARKRWIAGSLEPKGTLTIDAGAVTALRAGKSLLPAGVIRVDGQFARGDAVLVRGPDTHEIGRGLVAYDAEDADKIKGRSSPDVLIILGISGRSEMIHRDDLVIGSVPGV.

K15 is an ATP binding site. Substrate-binding residues include S56, D143, and N155. S175–D176 is a binding site for ATP. In terms of domain architecture, PUA spans K281–S358.

Belongs to the glutamate 5-kinase family.

It is found in the cytoplasm. It catalyses the reaction L-glutamate + ATP = L-glutamyl 5-phosphate + ADP. The protein operates within amino-acid biosynthesis; L-proline biosynthesis; L-glutamate 5-semialdehyde from L-glutamate: step 1/2. In terms of biological role, catalyzes the transfer of a phosphate group to glutamate to form L-glutamate 5-phosphate. This is Glutamate 5-kinase from Rhodopseudomonas palustris (strain BisA53).